Consider the following 457-residue polypeptide: Senescence-associated protein OSA15, chloroplastic (457 aa).

Residues 1-57 (MATRIPGTVAASGVYYNDQYRMPCKLKGIHCMALNCIPQKAKVRKCMNGYQSTFRFC) constitute a chloroplast transit peptide.

It belongs to the ATA15/OSA15 family. In terms of tissue distribution, expressed in leaves (at protein level).

It is found in the plastid. The protein resides in the chloroplast. Its function is as follows. May be involved in the regulation of leaf senescence. The protein is Senescence-associated protein OSA15, chloroplastic of Oryza sativa subsp. japonica (Rice).